A 119-amino-acid polypeptide reads, in one-letter code: Large ribosomal subunit protein bL20 (119 aa).

The protein belongs to the bacterial ribosomal protein bL20 family.

In terms of biological role, binds directly to 23S ribosomal RNA and is necessary for the in vitro assembly process of the 50S ribosomal subunit. It is not involved in the protein synthesizing functions of that subunit. The polypeptide is Large ribosomal subunit protein bL20 (Clostridium perfringens (strain ATCC 13124 / DSM 756 / JCM 1290 / NCIMB 6125 / NCTC 8237 / Type A)).